Consider the following 249-residue polypeptide: Probable transcriptional regulatory protein Sare_1779 (249 aa).

The protein belongs to the TACO1 family.

The protein resides in the cytoplasm. The protein is Probable transcriptional regulatory protein Sare_1779 of Salinispora arenicola (strain CNS-205).